A 1271-amino-acid chain; its full sequence is SR-related and CTD-associated factor 8 (1271 aa).

A CID domain is found at 1-139 (MEAVKTFNSE…PLLDMAAGIP (139 aa)). Residue Thr-6 is modified to Phosphothreonine. Residue Lys-18 forms a Glycyl lysine isopeptide (Lys-Gly) (interchain with G-Cter in SUMO1) linkage. The segment covering 270–283 (GEDSEHSEEPKKEI) has biased composition (basic and acidic residues). Disordered regions lie at residues 270-289 (GEDS…SQLS), 322-354 (QQQP…SQQH), and 384-468 (EEVF…PPIR). The residue at position 273 (Ser-273) is a Phosphoserine. The segment covering 327–354 (KATPQDSQEGTFGSEHSASPSQGSSQQH) has biased composition (polar residues). Residues 394–443 (VAVRSRSRTHSRSRSRSPRKRRSRSRSGSRKRKHRKRSRSRSRERKRKSS) show a composition bias toward basic residues. A compositionally biased stretch (basic and acidic residues) spans 447–461 (SSERRAREREKERQK). Residues 477-551 (TTLWVGQVDK…KVIKIAWALN (75 aa)) form the RRM domain. Position 615 is a phosphothreonine (Thr-615). Ser-617 and Ser-779 each carry phosphoserine. Positions 899–918 (TQPPAGPQNLPPLSIPNQRM) are disordered. Residues 902 to 912 (PAGPQNLPPLS) are compositionally biased toward pro residues. An asymmetric dimethylarginine mark is found at Arg-917, Arg-927, and Arg-938. Pro residues-rich tracts occupy residues 945–956 (GIPPQRGIPPPS) and 963–972 (HPPPRGPFPP). Residues 945-1064 (GIPPQRGIPP…DGRDHFGRPP (120 aa)) form a disordered region. 2 stretches are compositionally biased toward basic and acidic residues: residues 1011–1027 (EGDR…RESI) and 1034–1064 (DVRD…GRPP). Arg-1073 carries the asymmetric dimethylarginine modification. A disordered region spans residues 1198-1271 (YFEGATSQRK…VVESTETEGT (74 aa)). Over residues 1255–1271 (ADIESEPVVESTETEGT) the composition is skewed to acidic residues.

As to quaternary structure, interacts with POLR2A; via C-terminal heptapeptide repeat domain (CTD) phosphorylated at 'Ser-2' and 'Ser-5'. Identified in a complex with CDC5L and other spliceosomal proteins.

It localises to the nucleus. The protein resides in the nucleus matrix. Functionally, anti-terminator protein required to prevent early mRNA termination during transcription. Together with SCAF4, acts by suppressing the use of early, alternative poly(A) sites, thereby preventing the accumulation of non-functional truncated proteins. Mechanistically, associates with the phosphorylated C-terminal heptapeptide repeat domain (CTD) of the largest RNA polymerase II subunit (POLR2A), and subsequently binds nascent RNA upstream of early polyadenylation sites to prevent premature mRNA transcript cleavage and polyadenylation. Independently of SCAF4, also acts as a positive regulator of transcript elongation. This is SR-related and CTD-associated factor 8 from Homo sapiens (Human).